The chain runs to 843 residues: MPLSYQHFRKLLLLDDEAGPLEEELPRLADEGLNRRVAEDLNLGNPNVSIPWTHKVGNFTGLYSSTVPVFNPDWQTPKFPDIHLKEDIINRCQNYVGPLTVNEKRRLKLIMPARFYPTLTKYLPLEKGIKPYYPEHAVNHYFKTRHYLHTLWKAGILYKRETTRSASFCGSPYSWEQELQHGRLVFQTSERHGDESFCSQSSGILSRSPVGPCVRSQLKQSRLGLQPQQGSLARGKSGRSGSIRARVHPTTRRFFGVEPAGPGHIDNSASSSSSCIHQSAVRKTTHSHLTTAQRHSPSGHAVEFHSIPPSSAGSQSKGSVFSCWWLQFRNSKPCSEYCLSHLINLHEDWGPCIEHGEHNIRIPRTPARVTGGVFLVDKNPHNTSESRLVVDFSQFSRGSSRVYWPKFAVPNLQSLTNLLSSNLSWLSLDVSAAFYHLPLHPAAMPHLLVGSSGLSRYVARLSSTSRINDHQHGTLQNLHDHCSRNLYVSLMLLYKTFGRKLHLYSHPIILGFRKIPMGVGLSPFLLAQFTSAICSVVRRAFPHCLAFSYMDDLVLGAKSVQHLESLFTAVTNFLMSLGIHLNPHKTKRWGYSLNFMGYVIGSWGSLPQEHIVHKLKHCFRKLPVNRPIDWKVCQRIVGLLGFAAPFTQCGYPALMPLYACIQAKQAFTFSPTYKAFLCKQYLNLYPVARQRAGLCQVFADATPTGWGLAIGHQRVRGTFVAPLPIHTAELLAACFARSRSGANILGTDNSVVLSRKYTSFPWLLGCAANWILRGTSFVYVPSALNPADDPSRGRLGIYRPLLRLPFRPSTGRTSLYADSPSVPSHLPDRVHFASPLHVAWRPP.

The tract at residues Met-1–Gln-177 is terminal protein domain (TP). Residues Glu-178–His-346 form a spacer region. 2 disordered regions span residues Leu-218–Ile-243 and Thr-291–Gln-315. The polymerase/reverse transcriptase domain (RT) stretch occupies residues Glu-347 to Gln-690. The region spanning Glu-357–Ile-600 is the Reverse transcriptase domain. 3 residues coordinate Mg(2+): Asp-429, Asp-551, and Asp-552.

The protein belongs to the hepadnaviridae P protein family.

The catalysed reaction is DNA(n) + a 2'-deoxyribonucleoside 5'-triphosphate = DNA(n+1) + diphosphate. It carries out the reaction Endonucleolytic cleavage to 5'-phosphomonoester.. With respect to regulation, activated by host HSP70 and HSP40 in vitro to be able to bind the epsilon loop of the pgRNA. Because deletion of the RNase H region renders the protein partly chaperone-independent, the chaperones may be needed indirectly to relieve occlusion of the RNA-binding site by this domain. Inhibited by several reverse-transcriptase inhibitors: Lamivudine, Adefovir and Entecavir. In terms of biological role, multifunctional enzyme that converts the viral RNA genome into dsDNA in viral cytoplasmic capsids. This enzyme displays a DNA polymerase activity that can copy either DNA or RNA templates, and a ribonuclease H (RNase H) activity that cleaves the RNA strand of RNA-DNA heteroduplexes in a partially processive 3'- to 5'-endonucleasic mode. Neo-synthesized pregenomic RNA (pgRNA) are encapsidated together with the P protein, and reverse-transcribed inside the nucleocapsid. Initiation of reverse-transcription occurs first by binding the epsilon loop on the pgRNA genome, and is initiated by protein priming, thereby the 5'-end of (-)DNA is covalently linked to P protein. Partial (+)DNA is synthesized from the (-)DNA template and generates the relaxed circular DNA (RC-DNA) genome. After budding and infection, the RC-DNA migrates in the nucleus, and is converted into a plasmid-like covalently closed circular DNA (cccDNA). The activity of P protein does not seem to be necessary for cccDNA generation, and is presumably released from (+)DNA by host nuclear DNA repair machinery. This chain is Protein P, found in Hepatitis B virus genotype C subtype ayw (isolate Australia/AustRC/1992) (HBV-C).